Here is a 374-residue protein sequence, read N- to C-terminus: Cyclin-D (374 aa).

This sequence belongs to the cyclin family. Cyclin D subfamily.

This chain is Cyclin-D (CycD), found in Ostreococcus tauri.